We begin with the raw amino-acid sequence, 340 residues long: Anthranilate phosphoribosyltransferase (340 aa).

5-phospho-alpha-D-ribose 1-diphosphate is bound by residues Gly-84, 87-88 (GD), Thr-92, 94-97 (NIST), 112-120 (KHGSRSVSS), and Ser-124. Gly-84 provides a ligand contact to anthranilate. Ser-96 provides a ligand contact to Mg(2+). Arg-170 serves as a coordination point for anthranilate. Mg(2+)-binding residues include Asp-228 and Glu-229.

The protein belongs to the anthranilate phosphoribosyltransferase family. As to quaternary structure, homodimer. Mg(2+) serves as cofactor.

The enzyme catalyses N-(5-phospho-beta-D-ribosyl)anthranilate + diphosphate = 5-phospho-alpha-D-ribose 1-diphosphate + anthranilate. Its pathway is amino-acid biosynthesis; L-tryptophan biosynthesis; L-tryptophan from chorismate: step 2/5. Functionally, catalyzes the transfer of the phosphoribosyl group of 5-phosphorylribose-1-pyrophosphate (PRPP) to anthranilate to yield N-(5'-phosphoribosyl)-anthranilate (PRA). The chain is Anthranilate phosphoribosyltransferase from Psychromonas ingrahamii (strain DSM 17664 / CCUG 51855 / 37).